A 635-amino-acid polypeptide reads, in one-letter code: DNA primase (635 aa).

The segment at 41-65 (CPFHDEKSPSFSVSPAKQMYYCFGC) adopts a CHC2-type zinc-finger fold. The region spanning 265–348 (DEAILVEGYF…SGQVNLRILN (84 aa)) is the Toprim domain. Residues Glu271, Asp317, and Asp319 each coordinate Mg(2+).

This sequence belongs to the DnaG primase family. In terms of assembly, monomer. Interacts with DnaB. The cofactor is Zn(2+). It depends on Mg(2+) as a cofactor.

It catalyses the reaction ssDNA + n NTP = ssDNA/pppN(pN)n-1 hybrid + (n-1) diphosphate.. In terms of biological role, RNA polymerase that catalyzes the synthesis of short RNA molecules used as primers for DNA polymerase during DNA replication. This chain is DNA primase, found in Synechocystis sp. (strain ATCC 27184 / PCC 6803 / Kazusa).